Here is a 197-residue protein sequence, read N- to C-terminus: Small ribosomal subunit protein uS7 (197 aa).

It belongs to the universal ribosomal protein uS7 family.

The protein is Small ribosomal subunit protein uS7 (RPS5) of Cicer arietinum (Chickpea).